We begin with the raw amino-acid sequence, 237 residues long: Uridylate kinase (237 aa).

Residue 12 to 15 (KLSG) coordinates ATP. The tract at residues 20-25 (GEDGLG) is involved in allosteric activation by GTP. G54 is a UMP binding site. Residues G55 and R59 each coordinate ATP. UMP contacts are provided by residues D74 and 135 to 142 (TGNPFFTT). ATP-binding residues include T162, Y168, and D171.

Belongs to the UMP kinase family. In terms of assembly, homohexamer.

It is found in the cytoplasm. It carries out the reaction UMP + ATP = UDP + ADP. The protein operates within pyrimidine metabolism; CTP biosynthesis via de novo pathway; UDP from UMP (UMPK route): step 1/1. With respect to regulation, allosterically activated by GTP. Inhibited by UTP. Its function is as follows. Catalyzes the reversible phosphorylation of UMP to UDP. The sequence is that of Uridylate kinase (pyrH) from Haemophilus influenzae (strain ATCC 51907 / DSM 11121 / KW20 / Rd).